Reading from the N-terminus, the 476-residue chain is Adenosylhomocysteinase (476 aa).

Residues threonine 67, aspartate 142, and glutamate 202 each contribute to the substrate site. 203 to 205 (TTT) provides a ligand contact to NAD(+). Substrate contacts are provided by lysine 232 and aspartate 236. NAD(+)-binding positions include asparagine 237, 266-271 (GYGDVG), glutamate 289, asparagine 324, 345-347 (IGH), and asparagine 390.

Belongs to the adenosylhomocysteinase family. NAD(+) serves as cofactor.

The protein localises to the cytoplasm. It catalyses the reaction S-adenosyl-L-homocysteine + H2O = L-homocysteine + adenosine. The protein operates within amino-acid biosynthesis; L-homocysteine biosynthesis; L-homocysteine from S-adenosyl-L-homocysteine: step 1/1. May play a key role in the regulation of the intracellular concentration of adenosylhomocysteine. This is Adenosylhomocysteinase from Synechococcus sp. (strain CC9311).